The sequence spans 334 residues: Ornithine carbamoyltransferase subunit F (334 aa).

Residues 56–59, Gln83, Arg107, and 134–137 each bind carbamoyl phosphate; these read STRT and HPTQ. L-ornithine contacts are provided by residues Asn168, Asp232, and 236-237; that span reads SM. Residues 274-275 and Arg320 contribute to the carbamoyl phosphate site; that span reads CL.

It belongs to the aspartate/ornithine carbamoyltransferase superfamily. OTCase family. In terms of assembly, in E.coli strain K12, trimer of identical or non-identical chains are composed of ArgI (I) and/or ArgF (F). The trimer has the following composition: FFI, FFF, FII, III. E.coli strains B and W, which are known to contain only ArgI, produce only a trimer of identical chains (III).

It localises to the cytoplasm. The catalysed reaction is carbamoyl phosphate + L-ornithine = L-citrulline + phosphate + H(+). The protein operates within amino-acid biosynthesis; L-arginine biosynthesis; L-arginine from L-ornithine and carbamoyl phosphate: step 1/3. Functionally, reversibly catalyzes the transfer of the carbamoyl group from carbamoyl phosphate (CP) to the N(epsilon) atom of ornithine (ORN) to produce L-citrulline, which is a substrate for argininosuccinate synthetase, the enzyme involved in the final step in arginine biosynthesis. In Escherichia coli (strain K12), this protein is Ornithine carbamoyltransferase subunit F.